The sequence spans 458 residues: MKMIEKYRGKKVLVLGLGKSGVNAAKLLKKLGAEVTVNDKNTPSDLTQVNELKNEGIEVITGSHPLELLENIDLMVKNPGIPYTNVLVSGAKDKGIKIITEPELAFEISDARFVGVTGTNGKTTTTTMISLMLNQGQTEGKAYVAGNIGVPASQVAQEATSKDTIVTELSSFQLLGITEYHPKVAVLTNIYEAHIDYHGTRENYVNAKMRIVMNQTEDDYFVVNWDNEEWQELSQRSKAKIVPFSRLGKSKDGAYVAGGYLFYKEDKIMPVDNIKVPGTHNVENALAAIAVAKIFGKSNEDIKEVLTTFSGVRHRTQYVTTLNGRKFYNDSKATNMEATEKALAGFNNPVVLLAGGLDRGFTFEKLEPSLKNKVHAMIVFGETADLMAKAGKEAGVEKIIKTKDAVSAVPEAYKVSNEGDVILLSPACASWDQWPTFEVRGDKFIEAVEKLTEELEEK.

Position 118–124 (118–124) interacts with ATP; sequence GTNGKTT.

Belongs to the MurCDEF family.

The protein localises to the cytoplasm. The catalysed reaction is UDP-N-acetyl-alpha-D-muramoyl-L-alanine + D-glutamate + ATP = UDP-N-acetyl-alpha-D-muramoyl-L-alanyl-D-glutamate + ADP + phosphate + H(+). It participates in cell wall biogenesis; peptidoglycan biosynthesis. Its function is as follows. Cell wall formation. Catalyzes the addition of glutamate to the nucleotide precursor UDP-N-acetylmuramoyl-L-alanine (UMA). This chain is UDP-N-acetylmuramoylalanine--D-glutamate ligase, found in Ligilactobacillus salivarius (strain UCC118) (Lactobacillus salivarius).